Here is a 143-residue protein sequence, read N- to C-terminus: Actinoxanthin (143 aa).

Positions M1–A33 are cleaved as a signal peptide. 2 cysteine pairs are disulfide-bonded: C69-C78 and C119-C124.

The protein belongs to the neocarzinostatin family.

Functionally, binds non-covalently to a chromophore which is the cytotoxic and mutagenic component of the antibiotic. The chromophore binds to DNA as a weak intercalator and causes single- and double-strand breaks. In Streptomyces globisporus, this protein is Actinoxanthin (axnA).